Consider the following 412-residue polypeptide: Aurora kinase (412 aa).

The interval 94 to 119 (NEKVRPSKSSHIPVKSPIRKKGHSPA) is disordered. Residues 148 to 401 (FEIGKVLGKG…LAEVMNHPWI (254 aa)) form the Protein kinase domain. Residues 154-162 (LGKGKLGKV) and Lys-177 each bind ATP. The active-site Proton acceptor is Asp-271.

The protein belongs to the protein kinase superfamily. Ser/Thr protein kinase family. Aurora subfamily.

It localises to the nucleus. Its subcellular location is the cytoplasm. The protein resides in the cytoskeleton. It is found in the spindle. The protein localises to the chromosome. It localises to the centromere. Its subcellular location is the kinetochore. It carries out the reaction L-seryl-[protein] + ATP = O-phospho-L-seryl-[protein] + ADP + H(+). It catalyses the reaction L-threonyl-[protein] + ATP = O-phospho-L-threonyl-[protein] + ADP + H(+). Functionally, component of the chromosomal passenger complex (CPC), a complex that acts as a key regulator of chromosome segregation and cytokinesis. Has a role in error-correction of aberrent kinetochore-microtubule attachments to ensure that sister kinetochores become bioriented and connect to opposite poles by promoting spindle assembly checkpoint signaling. The chain is Aurora kinase (IPL1) from Debaryomyces hansenii (strain ATCC 36239 / CBS 767 / BCRC 21394 / JCM 1990 / NBRC 0083 / IGC 2968) (Yeast).